Here is a 1099-residue protein sequence, read N- to C-terminus: Carbamoyl phosphate synthase large chain (1099 aa).

A carboxyphosphate synthetic domain region spans residues 1 to 402 (MPKREDIKRI…ALGKALRSLE (402 aa)). Positions 129, 169, 175, 176, 208, 210, 215, 241, 242, 243, 285, and 299 each coordinate ATP. Residues 133–328 (KETMEKAGLE…IAKVAALLAV (196 aa)) form the ATP-grasp 1 domain. Residues Gln285, Glu299, and Asn301 each contribute to the Mg(2+) site. 3 residues coordinate Mn(2+): Gln285, Glu299, and Asn301. The interval 403-541 (LDAAPKLDLE…STYNGVENEA (139 aa)) is oligomerization domain. The carbamoyl phosphate synthetic domain stretch occupies residues 542-944 (VPSDREKIMI…AFAKAQIAAG (403 aa)). In terms of domain architecture, ATP-grasp 2 spans 666-857 (AKLLKQIGLK…VARIAAKIMV (192 aa)). The ATP site is built by Arg702, Lys741, Leu743, Glu748, Gly773, Val774, His775, Ser776, Gln816, and Glu828. 3 residues coordinate Mg(2+): Gln816, Glu828, and Asn830. Mn(2+)-binding residues include Gln816, Glu828, and Asn830. In terms of domain architecture, MGS-like spans 945-1099 (NPLPTTGAIL…VRRLTDTWKM (155 aa)). Residues 945–1099 (NPLPTTGAIL…VRRLTDTWKM (155 aa)) form an allosteric domain region.

This sequence belongs to the CarB family. In terms of assembly, composed of two chains; the small (or glutamine) chain promotes the hydrolysis of glutamine to ammonia, which is used by the large (or ammonia) chain to synthesize carbamoyl phosphate. Tetramer of heterodimers (alpha,beta)4. Requires Mg(2+) as cofactor. Mn(2+) is required as a cofactor.

The catalysed reaction is hydrogencarbonate + L-glutamine + 2 ATP + H2O = carbamoyl phosphate + L-glutamate + 2 ADP + phosphate + 2 H(+). It carries out the reaction hydrogencarbonate + NH4(+) + 2 ATP = carbamoyl phosphate + 2 ADP + phosphate + 2 H(+). The protein operates within amino-acid biosynthesis; L-arginine biosynthesis; carbamoyl phosphate from bicarbonate: step 1/1. It participates in pyrimidine metabolism; UMP biosynthesis via de novo pathway; (S)-dihydroorotate from bicarbonate: step 1/3. Large subunit of the glutamine-dependent carbamoyl phosphate synthetase (CPSase). CPSase catalyzes the formation of carbamoyl phosphate from the ammonia moiety of glutamine, carbonate, and phosphate donated by ATP, constituting the first step of 2 biosynthetic pathways, one leading to arginine and/or urea and the other to pyrimidine nucleotides. The large subunit (synthetase) binds the substrates ammonia (free or transferred from glutamine from the small subunit), hydrogencarbonate and ATP and carries out an ATP-coupled ligase reaction, activating hydrogencarbonate by forming carboxy phosphate which reacts with ammonia to form carbamoyl phosphate. This Thermotoga petrophila (strain ATCC BAA-488 / DSM 13995 / JCM 10881 / RKU-1) protein is Carbamoyl phosphate synthase large chain.